Here is a 196-residue protein sequence, read N- to C-terminus: Large ribosomal subunit protein mL66 (196 aa).

Residues 1 to 34 (MAALRRLVSGCGRQLQAFLAGPAATGWLWLPARG) constitute a mitochondrion transit peptide.

It belongs to the bacterial ribosomal protein bS18 family. Mitochondrion-specific ribosomal protein mL66 subfamily. As to quaternary structure, component of the mitochondrial ribosome small subunit (28S) which comprises a 12S rRNA and about 30 distinct proteins.

The protein resides in the mitochondrion. This Mus musculus (Mouse) protein is Large ribosomal subunit protein mL66 (Mrps18a).